The sequence spans 294 residues: Tryptophan 2,3-dioxygenase (294 aa).

The tract at residues 1–20 is disordered; sequence MSEFKGCPFSGAASEAGTKA. Substrate contacts are provided by residues 63-67, tyrosine 125, and arginine 129; that span reads FIVQH. Histidine 252 is a binding site for heme. Substrate is bound at residue threonine 266.

The protein belongs to the tryptophan 2,3-dioxygenase family. In terms of assembly, homotetramer. The cofactor is heme.

It catalyses the reaction L-tryptophan + O2 = N-formyl-L-kynurenine. The protein operates within amino-acid degradation; L-tryptophan degradation via kynurenine pathway; L-kynurenine from L-tryptophan: step 1/2. Functionally, heme-dependent dioxygenase that catalyzes the oxidative cleavage of the L-tryptophan (L-Trp) pyrrole ring and converts L-tryptophan to N-formyl-L-kynurenine. Catalyzes the oxidative cleavage of the indole moiety. This is Tryptophan 2,3-dioxygenase from Cupriavidus necator (strain ATCC 17699 / DSM 428 / KCTC 22496 / NCIMB 10442 / H16 / Stanier 337) (Ralstonia eutropha).